A 340-amino-acid chain; its full sequence is DNA-directed RNA polymerase subunit alpha (340 aa).

Residues 1–236 (MLSLSKNWNT…EQLQLFISFE (236 aa)) form an alpha N-terminal domain (alpha-NTD) region. Residues 251 to 340 (FSPYLLKRVD…LSKRYEDSYN (90 aa)) are alpha C-terminal domain (alpha-CTD).

It belongs to the RNA polymerase alpha chain family. As to quaternary structure, homodimer. The RNAP catalytic core consists of 2 alpha, 1 beta, 1 beta' and 1 omega subunit. When a sigma factor is associated with the core the holoenzyme is formed, which can initiate transcription.

It carries out the reaction RNA(n) + a ribonucleoside 5'-triphosphate = RNA(n+1) + diphosphate. In terms of biological role, DNA-dependent RNA polymerase catalyzes the transcription of DNA into RNA using the four ribonucleoside triphosphates as substrates. This chain is DNA-directed RNA polymerase subunit alpha, found in Rickettsia africae (strain ESF-5).